Here is a 1345-residue protein sequence, read N- to C-terminus: DNA-directed RNA polymerase subunit beta (1345 aa).

It belongs to the RNA polymerase beta chain family. The RNAP catalytic core consists of 2 alpha, 1 beta, 1 beta' and 1 omega subunit. When a sigma factor is associated with the core the holoenzyme is formed, which can initiate transcription.

It carries out the reaction RNA(n) + a ribonucleoside 5'-triphosphate = RNA(n+1) + diphosphate. DNA-dependent RNA polymerase catalyzes the transcription of DNA into RNA using the four ribonucleoside triphosphates as substrates. The polypeptide is DNA-directed RNA polymerase subunit beta (Shewanella oneidensis (strain ATCC 700550 / JCM 31522 / CIP 106686 / LMG 19005 / NCIMB 14063 / MR-1)).